The sequence spans 335 residues: Dolichyl-diphosphooligosaccharide--protein glycosyltransferase subunit MAGT1 (335 aa).

Positions 1–29 (MASPRWFWSVCAIAAVALLLVSKVPSASA) are cleaved as a signal peptide. Topologically, residues 30 to 184 (QRKKEMVLSE…DVNIRVIRPP (155 aa)) are extracellular. A Thioredoxin domain is found at 47-175 (WANKRPVIRM…IARWIADRTD (129 aa)). The N-linked (GlcNAc...) asparagine glycan is linked to Asn71. A disulfide bond links Cys87 and Cys90. The chain crosses the membrane as a helical span at residues 185–205 (NYAGPLMLGLLLAVIGGLVYL). Over 206 to 209 (RRSN) the chain is Cytoplasmic. A helical transmembrane segment spans residues 210–230 (MEFLFNKTGWAFAALCFVLAM). Residues 231–270 (TSGQMWNHIRGPPYAHKNPHTGHVNYIHGSSQAQFVAETH) are Extracellular-facing. Residues 271 to 291 (IVLLFNGGVTLGMVLLCEAAT) form a helical membrane-spanning segment. Topologically, residues 292–300 (SDMDIGKRR) are cytoplasmic. A helical membrane pass occupies residues 301–321 (MMCIAGIGLVVLFFSWMLSIF). Residues 322–335 (RSKYHGYPYSFLMS) are Extracellular-facing.

Belongs to the OST3/OST6 family. In terms of assembly, accessory component of the STT3B-containing form of the oligosaccharyltransferase (OST) complex. OST exists in two different complex forms which contain common core subunits RPN1, RPN2, OST48, OST4, DAD1 and TMEM258, either STT3A or STT3B as catalytic subunits, and form-specific accessory subunits. OST can form stable complexes with the Sec61 complex or with both the Sec61 and TRAP complexes. The association of TUSC3 or MAGT1 with the STT3B-containing complex seems to be mutually exclusvice. As to expression, expressed at high levels in kidney, colon, heart and liver. Expressed at lower levels in intestine, spleen, brain and lung.

The protein localises to the cell membrane. It localises to the endoplasmic reticulum. It is found in the endoplasmic reticulum membrane. It participates in protein modification; protein glycosylation. Functionally, accessory component of the STT3B-containing form of the N-oligosaccharyl transferase (OST) complex which catalyzes the transfer of a high mannose oligosaccharide from a lipid-linked oligosaccharide donor to an asparagine residue within an Asn-X-Ser/Thr consensus motif in nascent polypeptide chains. Involved in N-glycosylation of STT3B-dependent substrates. Specifically required for the glycosylation of a subset of acceptor sites that are near cysteine residues; in this function seems to act redundantly with TUSC3. In its oxidized form proposed to form transient mixed disulfides with a glycoprotein substrate to facilitate access of STT3B to the unmodified acceptor site. Also has oxidoreductase-independent functions in the STT3B-containing OST complex possibly involving substrate recognition. Could indirectly play a role in Mg(2+) transport in epithelial cells. The sequence is that of Dolichyl-diphosphooligosaccharide--protein glycosyltransferase subunit MAGT1 from Mus musculus (Mouse).